The chain runs to 219 residues: Flagellar biosynthetic protein FliZ (219 aa).

Positions 1 to 26 (MKKSQYFIVFICFFVLFSVHPIAAAA) are cleaved as a signal peptide. Residues 41–61 (KDEKTADQSEQKKEKTTKTAD) show a composition bias toward basic and acidic residues. The interval 41-62 (KDEKTADQSEQKKEKTTKTADE) is disordered. A helical transmembrane segment spans residues 71 to 96 (VSAFDFVKMIFALLFVIVLIYGLVKL). Over residues 200-212 (LEELKQNRSEGKK) the composition is skewed to basic and acidic residues. The tract at residues 200 to 219 (LEELKQNRSEGKKKGPRHHE) is disordered.

The protein resides in the cell membrane. Functionally, may be a structural component of the flagellum that anchors the rod to the membrane. This is Flagellar biosynthetic protein FliZ (fliZ) from Bacillus subtilis (strain 168).